The primary structure comprises 330 residues: Small ribosomal subunit protein uS2 (330 aa).

The protein belongs to the universal ribosomal protein uS2 family.

The chain is Small ribosomal subunit protein uS2 from Bradyrhizobium sp. (strain BTAi1 / ATCC BAA-1182).